We begin with the raw amino-acid sequence, 309 residues long: Aspartate carbamoyltransferase catalytic subunit (309 aa).

Carbamoyl phosphate contacts are provided by R56 and T57. Position 84 (K84) interacts with L-aspartate. Residues R106, H136, and Q139 each contribute to the carbamoyl phosphate site. R169 and R221 together coordinate L-aspartate. Carbamoyl phosphate contacts are provided by A264 and P265.

This sequence belongs to the aspartate/ornithine carbamoyltransferase superfamily. ATCase family. As to quaternary structure, heterododecamer (2C3:3R2) of six catalytic PyrB chains organized as two trimers (C3), and six regulatory PyrI chains organized as three dimers (R2).

It catalyses the reaction carbamoyl phosphate + L-aspartate = N-carbamoyl-L-aspartate + phosphate + H(+). Its pathway is pyrimidine metabolism; UMP biosynthesis via de novo pathway; (S)-dihydroorotate from bicarbonate: step 2/3. Functionally, catalyzes the condensation of carbamoyl phosphate and aspartate to form carbamoyl aspartate and inorganic phosphate, the committed step in the de novo pyrimidine nucleotide biosynthesis pathway. The protein is Aspartate carbamoyltransferase catalytic subunit of Limosilactobacillus reuteri subsp. reuteri (strain JCM 1112) (Lactobacillus reuteri).